The primary structure comprises 208 residues: Small ribosomal subunit protein uS4 (208 aa).

A disordered region spans residues 29–48 (MERRPYGPGQHGRARRKQDS). One can recognise an S4 RNA-binding domain in the interval 95 to 155 (QRLDALVLRA…ERSEKMVPFQ (61 aa)).

The protein belongs to the universal ribosomal protein uS4 family. Part of the 30S ribosomal subunit. Contacts protein S5. The interaction surface between S4 and S5 is involved in control of translational fidelity.

Its function is as follows. One of the primary rRNA binding proteins, it binds directly to 16S rRNA where it nucleates assembly of the body of the 30S subunit. Functionally, with S5 and S12 plays an important role in translational accuracy. The polypeptide is Small ribosomal subunit protein uS4 (Micrococcus luteus (strain ATCC 4698 / DSM 20030 / JCM 1464 / CCM 169 / CCUG 5858 / IAM 1056 / NBRC 3333 / NCIMB 9278 / NCTC 2665 / VKM Ac-2230) (Micrococcus lysodeikticus)).